The sequence spans 226 residues: Gap junction beta-2 protein (226 aa).

The Cytoplasmic segment spans residues 1–20 (MDWGGLHTILGGVNKHSTSI). The chain crosses the membrane as a helical span at residues 21–40 (GKIWLTVLFIFRIMILVVAA). Residues 41–75 (KEVWGDEQADFVCNTLQPGCKNVCYDHYFPISHIR) lie on the Extracellular side of the membrane. 3 cysteine pairs are disulfide-bonded: Cys-53-Cys-180, Cys-60-Cys-174, and Cys-64-Cys-169. Residues 76–98 (LWALQLIFVSTPALLVAMHVAYY) traverse the membrane as a helical segment. Over 99 to 131 (RHEKKRKFIRGEIKTEFKDIEEIKKQKVRIEGS) the chain is Cytoplasmic. A helical transmembrane segment spans residues 132-154 (LWWTYTGSIFFRVIFEAAFMYVF). At 155–192 (YVMYDGFAMQRLVKCNAWPCPNTVDCFVSRPTEKTVFT) the chain is on the extracellular side. Residues 193-215 (VFMIAVSGICILLNVTELCYLLI) traverse the membrane as a helical segment. Residues 216–226 (RFCSGKSKKPV) lie on the Cytoplasmic side of the membrane.

This sequence belongs to the connexin family. A connexon is composed of a hexamer of connexins. Interacts with CNST.

The protein resides in the cell membrane. The protein localises to the cell junction. It localises to the gap junction. In terms of biological role, one gap junction consists of a cluster of closely packed pairs of transmembrane channels, the connexons, through which materials of low MW diffuse from one cell to a neighboring cell. The sequence is that of Gap junction beta-2 protein (GJB2) from Bos taurus (Bovine).